Reading from the N-terminus, the 69-residue chain is Putative membrane protein insertion efficiency factor (69 aa).

It belongs to the UPF0161 family.

It is found in the cell membrane. Could be involved in insertion of integral membrane proteins into the membrane. This is Putative membrane protein insertion efficiency factor from Clostridium perfringens (strain SM101 / Type A).